Reading from the N-terminus, the 356-residue chain is MLFKKIDDINPLILLIDSCQYTNQIMNSYRHRNQTTSFIRKETIDCNIQLPRKIESDLLLSLSSNTDDYIPIINSLSNEDHINILKYTIVIDNVNYLEKILNCTSIDLSVNDDILLCTAIINCSSECLLYLLDKGIPIDFCDNYAIRACCIRLEKYIYTTRKNKSSCDMLKIVIDRGGNVNTHNYEPLYSAVNDNNFDKIKLLVENGANKLSDFKRKITNTNLEIFQYLIDNRVELEVNFDDIFLQSIINDDSECMKLFIELGANINSIPTLELTKIIINARHEILEILINYGLDINNINDKINNEINDNRCEDYDETIKTVELVSNAGIDIINLLKVVIQNALSVYNFTYPKYSI.

6 ANK repeats span residues 111-143 (NDDILLCTAIINCSSECLLYLLDKGIPIDFCDN), 152-182 (RLEKYIYTTRKNKSSCDMLKIVIDRGGNVNT), 183-213 (HNYEPLYSAVNDNNFDKIKLLVENGANKLSD), 215-238 (KRKITNTNLEIFQYLIDNRVELEV), 239-266 (NFDDIFLQSIINDDSECMKLFIELGANI), and 267-298 (NSIPTLELTKIIINARHEILEILINYGLDINN).

This chain is Putative ankyrin repeat protein R599, found in Acanthamoeba polyphaga (Amoeba).